The sequence spans 250 residues: 5'-nucleotidase SurE (250 aa).

D8, D9, S40, and N95 together coordinate a divalent metal cation.

The protein belongs to the SurE nucleotidase family. The cofactor is a divalent metal cation.

The protein localises to the cytoplasm. It carries out the reaction a ribonucleoside 5'-phosphate + H2O = a ribonucleoside + phosphate. Nucleotidase that shows phosphatase activity on nucleoside 5'-monophosphates. The polypeptide is 5'-nucleotidase SurE (Nitratidesulfovibrio vulgaris (strain DP4) (Desulfovibrio vulgaris)).